The following is a 632-amino-acid chain: Phosphomethylpyrimidine synthase (632 aa).

Substrate-binding positions include asparagine 237, methionine 266, tyrosine 295, histidine 331, 351 to 353 (SRG), 392 to 395 (DGLR), and glutamate 431. Zn(2+) is bound at residue histidine 435. Substrate is bound at residue tyrosine 458. Histidine 499 is a Zn(2+) binding site. Cysteine 579, cysteine 582, and cysteine 587 together coordinate [4Fe-4S] cluster.

This sequence belongs to the ThiC family. Homodimer. The cofactor is [4Fe-4S] cluster.

The enzyme catalyses 5-amino-1-(5-phospho-beta-D-ribosyl)imidazole + S-adenosyl-L-methionine = 4-amino-2-methyl-5-(phosphooxymethyl)pyrimidine + CO + 5'-deoxyadenosine + formate + L-methionine + 3 H(+). The protein operates within cofactor biosynthesis; thiamine diphosphate biosynthesis. Its function is as follows. Catalyzes the synthesis of the hydroxymethylpyrimidine phosphate (HMP-P) moiety of thiamine from aminoimidazole ribotide (AIR) in a radical S-adenosyl-L-methionine (SAM)-dependent reaction. This is Phosphomethylpyrimidine synthase from Chromobacterium violaceum (strain ATCC 12472 / DSM 30191 / JCM 1249 / CCUG 213 / NBRC 12614 / NCIMB 9131 / NCTC 9757 / MK).